A 389-amino-acid chain; its full sequence is Sulfate adenylyltransferase (389 aa).

The protein belongs to the sulfate adenylyltransferase family.

The catalysed reaction is sulfate + ATP + H(+) = adenosine 5'-phosphosulfate + diphosphate. The protein operates within sulfur metabolism; hydrogen sulfide biosynthesis; sulfite from sulfate: step 1/3. The sequence is that of Sulfate adenylyltransferase from Microcystis aeruginosa (strain NIES-843 / IAM M-2473).